The primary structure comprises 634 residues: DNA-directed RNA polymerase subunit gamma (634 aa).

4 residues coordinate Zn(2+): C74, C76, C89, and C92. Mg(2+) is bound by residues D471, D473, and D475.

The protein belongs to the RNA polymerase beta' chain family. RpoC1 subfamily. As to quaternary structure, in cyanobacteria the RNAP catalytic core is composed of 2 alpha, 1 beta, 1 beta', 1 gamma and 1 omega subunit. When a sigma factor is associated with the core the holoenzyme is formed, which can initiate transcription. Mg(2+) is required as a cofactor. Zn(2+) serves as cofactor.

It catalyses the reaction RNA(n) + a ribonucleoside 5'-triphosphate = RNA(n+1) + diphosphate. DNA-dependent RNA polymerase catalyzes the transcription of DNA into RNA using the four ribonucleoside triphosphates as substrates. This chain is DNA-directed RNA polymerase subunit gamma, found in Parasynechococcus marenigrum (strain WH8102).